The chain runs to 132 residues: MVKNQAQKRGVKRKQVKNIPSGVVHVKATFNNTIVTITDPAGNVISWASAGKVGYSGSRKSSAFAATVAAQDAAKAAMSSGLKEVEVGLKGTGAGRESAVRALISSGLIVSVIRDETPVPHNGCRPRKRRRV.

Belongs to the universal ribosomal protein uS11 family. As to quaternary structure, part of the 30S ribosomal subunit. Interacts with proteins S7 and S18. Binds to IF-3.

Located on the platform of the 30S subunit, it bridges several disparate RNA helices of the 16S rRNA. Forms part of the Shine-Dalgarno cleft in the 70S ribosome. In Chlamydia trachomatis serovar L2 (strain ATCC VR-902B / DSM 19102 / 434/Bu), this protein is Small ribosomal subunit protein uS11.